A 98-amino-acid polypeptide reads, in one-letter code: HssA/B-like protein 50 (98 aa).

Disordered stretches follow at residues 1 to 26 (MTLF…SFGS) and 68 to 98 (TRGS…CCGI). The span at 84-98 (GHGGMGGGNGSCCGI) shows a compositional bias: gly residues.

This sequence belongs to the hssA/B family.

This chain is HssA/B-like protein 50 (hssl50), found in Dictyostelium discoideum (Social amoeba).